The sequence spans 678 residues: MDSLTSILLLLELQHEFSGLKVPGRLAKFGPPFRPSEEFADAEDSPVMKMIAQSYIFTPTLPGVNKAPPEFWSDKLQPLLETIGKHNLSDSYDHGRVSKRKMVGFAVVVVLHVLSKGLLGKATPLSEDRKPTSNNEEEDDADEAKSSNADSSTDSVQKSLANVNMDDANGPERLHYPSVKRLREAYSLLVYGDGLQQALDRISVSEDVDSWDEPLRSVIENIRYTIAVILHFSFVTVDAIPESPHLVSNRKGPEGVVERLYNRIPWFLTRQVLRVGNAGLLMSGLTRLFLMKPLSWFGESRNLLQTMLAGIFNADLEHSESTMVETDAEFEDDAKWETMRKALQWFTQLSRTEQDDVRSQSINKELNITIAILEAYEAQQTETTETEGVDKEDSDKASSVQGNEDEVPDTASETEHSEIEDFHFDPYSEKGVHIAMRYFDAALTHRDRECLIHDLCDNDQLNDVVREFMNAFYNIIYEAHQAADFSQAIYDFQYFLWDVIQLSKAGAPLVKFINLVERYQSCFVRFIHRLVVNAPDLCGEWCDWYRHCLKQFSVEVKTPDAVDVAHKALNTLDEETKHQVLEEIGDYVKELDEESKKAIENKDSTSEWLLHLYNFFGSAIITPTTAHGVPQPQLPNCGMKLNRTKEKLLTPFRNLLMEQLNELQAKNQETPSEMTSTE.

Disordered stretches follow at residues 123 to 156 (TPLSEDRKPTSNNEEEDDADEAKSSNADSSTDSV) and 381 to 417 (TETTETEGVDKEDSDKASSVQGNEDEVPDTASETEHS).

It is found in the cytoplasm. This is an uncharacterized protein from Schizosaccharomyces pombe (strain 972 / ATCC 24843) (Fission yeast).